Reading from the N-terminus, the 191-residue chain is Ureidoglycolate lyase (191 aa).

It belongs to the ureidoglycolate lyase family. As to quaternary structure, homodimer.

The enzyme catalyses (S)-ureidoglycolate = urea + glyoxylate. Its pathway is nitrogen metabolism; (S)-allantoin degradation. In terms of biological role, catalyzes the catabolism of the allantoin degradation intermediate (S)-ureidoglycolate, generating urea and glyoxylate. Involved in the utilization of allantoin as secondary nitrogen source when primary sources are limiting. The sequence is that of Ureidoglycolate lyase from Schizosaccharomyces pombe (strain 972 / ATCC 24843) (Fission yeast).